The sequence spans 126 residues: Holo-[acyl-carrier-protein] synthase (126 aa).

Residues D9 and E58 each contribute to the Mg(2+) site.

This sequence belongs to the P-Pant transferase superfamily. AcpS family. Mg(2+) is required as a cofactor.

It localises to the cytoplasm. It carries out the reaction apo-[ACP] + CoA = holo-[ACP] + adenosine 3',5'-bisphosphate + H(+). Transfers the 4'-phosphopantetheine moiety from coenzyme A to a Ser of acyl-carrier-protein. The protein is Holo-[acyl-carrier-protein] synthase of Klebsiella pneumoniae subsp. pneumoniae (strain ATCC 700721 / MGH 78578).